Reading from the N-terminus, the 265-residue chain is Dehydrin COR47 (265 aa).

Residues 1 to 14 are compositionally biased toward basic and acidic residues; it reads MAEEYKNNVPEHET. The segment at 1–265 is disordered; the sequence is MAEEYKNNVP…EVKKEKESDD (265 aa). Ala-2 bears the N-acetylalanine mark. Positions 16-28 are enriched in polar residues; that stretch reads TVATEESPATTTE. Over residues 29–47 the composition is skewed to basic and acidic residues; sequence VTDRGLFDFLGKKEEEVKP. Ser-64 is subject to Phosphoserine. A compositionally biased stretch (basic and acidic residues) spans 69 to 79; that stretch reads AAEHEEVKENK. Residue Thr-90 is modified to Phosphothreonine. Basic and acidic residues-rich tracts occupy residues 96–105 and 129–156; these read NKPSVIEKLH and IVEG…KTAE. Repeat 1 spans residues 133 to 153; that stretch reads EEDKKGLVEKIKEKLPGHHDK. The 3 X 21 AA repeats, Lys-rich stretch occupies residues 133–251; sequence EEDKKGLVEK…KEKLPGYHAK (119 aa). The segment covering 160-172 has biased composition (low complexity); the sequence is PVSTTIPVPVSES. Basic and acidic residues-rich tracts occupy residues 173 to 204 and 227 to 265; these read VVEH…KAED and PVEH…ESDD. A run of 2 repeats spans residues 180–200 and 231–251.

It belongs to the plant dehydrin family.

This Arabidopsis thaliana (Mouse-ear cress) protein is Dehydrin COR47 (COR47).